The chain runs to 739 residues: Nucleoprotein (739 aa).

The stretch at 334-363 forms a coiled coil; it reads VNVGEQYQQLREAATEAEKQLQQYAESREL. 2 disordered regions span residues 414 to 475 and 493 to 641; these read RPNL…YHDD and DDNK…DIGQ. A compositionally biased stretch (polar residues) spans 531-546; it reads SDNNQQSADSEEQGGQ. The segment covering 570 to 579 has biased composition (acidic residues); sequence TLMDQGDDDP. Residues 614–624 are compositionally biased toward basic and acidic residues; the sequence is AEAHEPPHKSS. Positions 625-634 are enriched in polar residues; sequence NEPAETSQLN.

It belongs to the filoviruses nucleoprotein family. Homooligomer. Homomultimerizes to form the nucleocapsid. Binds to viral genomic RNA. Interacts with VP35 and VP30 to form the nucleocapsid. Interacts with host PPP2R5C; this interaction leads to VP30 dephosphorylation and viral transcription. Interacts with VP24; this interaction facilitates nucleocapsid assembly and genome packaging. Interacts with matrix protein VP40; this interaction allows recruitment of the nucleocapsid into progeny virions. Interacts with host STAU1. Interacts with host NXF1 (via RNA-binding domain); this interaction recruits NXF1 to the inclusion bodies were viral replication takes place, probably to export viral mRNA-NXF1 complexes from these sites. Interacts with host CCDC92; this interaction sequesters NP in the host cytoplasm. Interacts with host TRIM14. Post-translationally, phosphorylated and O-glycosylated by host. Acetylated by host EP300 in vitro.

The protein localises to the virion. Its subcellular location is the host cytoplasm. Its function is as follows. Oligomerizes into helical capsid to encapsidate the viral genome, protecting it from nucleases and the cellular innate immune response. VP35 binds to and stabilizes monomeric NP, keeping it soluble. Upon virus replication, NP is recruited to bind cooperatively viral genomic RNA and VP35 is released. The encapsidated genomic RNA is termed the nucleocapsid and serves as template for transcription and replication. The nucleocapsid is helical with a pitch of 10.81 NP per turn and a diameter of about 22nm. Each NP binds to six nucleotides of viral genomic RNA, three being exposed to the solvant and three hidden into the nucleocapsid. Also recruits host PPP2R5C phosphatase to dephosphorylate VP30 and thereby promote viral transcription. Upon virion assembly and budding, NP binds to VP24 and possibly host STAU1. In Reston ebolavirus (strain Reston-89) (REBOV), this protein is Nucleoprotein (NP).